Reading from the N-terminus, the 156-residue chain is Calcium-binding protein A (156 aa).

EF-hand domains follow at residues 4–39, 40–75, 80–115, and 118–153; these read AITK…TGSK, DPLR…VAAK, AINN…NNPD, and APLM…YKSL. Positions 17, 19, 21, 23, 28, 53, 55, 57, 64, 93, 95, 97, 99, 104, 131, 133, 135, and 142 each coordinate Ca(2+).

This Dictyostelium discoideum (Social amoeba) protein is Calcium-binding protein A (cbpA).